We begin with the raw amino-acid sequence, 92 residues long: Small ribosomal subunit protein bS20 (92 aa).

The protein belongs to the bacterial ribosomal protein bS20 family.

Its function is as follows. Binds directly to 16S ribosomal RNA. This is Small ribosomal subunit protein bS20 from Magnetococcus marinus (strain ATCC BAA-1437 / JCM 17883 / MC-1).